Consider the following 658-residue polypeptide: Protein teflon (658 aa).

Residues 33 to 56 (LYCHFCRDLFTQLPEFLRHLQSNH) form a C2H2-type 1 zinc finger. The tract at residues 80-131 (DKAHEDAQSAGHNSSSGDSRSLMNSEDSRAIDGSEENSDNSPVKPEQIGKQN) is disordered. The span at 89-104 (AGHNSSSGDSRSLMNS) shows a compositional bias: polar residues. 2 consecutive C2H2-type zinc fingers follow at residues 608–630 (YFCK…LISH) and 634–657 (FQCT…RNAH).

It belongs to the Teflon family.

It is found in the nucleus. Its subcellular location is the chromosome. Its function is as follows. Specifically required in males for proper segregation of autosomal bivalents at meiosis I. Expression is required in the male germ line prior to spermatocyte stage S4. May have a role as a bridging molecule maintaining adhesion to hold autosome bivalents together via heterochromatic connections. This Drosophila simulans (Fruit fly) protein is Protein teflon.